The sequence spans 200 residues: ATP-dependent Clp protease proteolytic subunit (200 aa).

S104 functions as the Nucleophile in the catalytic mechanism. The active site involves H129.

This sequence belongs to the peptidase S14 family. Fourteen ClpP subunits assemble into 2 heptameric rings which stack back to back to give a disk-like structure with a central cavity, resembling the structure of eukaryotic proteasomes.

Its subcellular location is the cytoplasm. The catalysed reaction is Hydrolysis of proteins to small peptides in the presence of ATP and magnesium. alpha-casein is the usual test substrate. In the absence of ATP, only oligopeptides shorter than five residues are hydrolyzed (such as succinyl-Leu-Tyr-|-NHMec, and Leu-Tyr-Leu-|-Tyr-Trp, in which cleavage of the -Tyr-|-Leu- and -Tyr-|-Trp bonds also occurs).. Functionally, cleaves peptides in various proteins in a process that requires ATP hydrolysis. Has a chymotrypsin-like activity. Plays a major role in the degradation of misfolded proteins. This chain is ATP-dependent Clp protease proteolytic subunit, found in Rubrobacter xylanophilus (strain DSM 9941 / JCM 11954 / NBRC 16129 / PRD-1).